The sequence spans 66 residues: Pteroicidin-alpha (66 aa).

The first 22 residues, Met-1 to Ala-22, serve as a signal peptide directing secretion. Arg-43 is subject to Arginine amide; partial. Positions Gly-44 to Ala-66 are excised as a propeptide.

It belongs to the pleurocidin family. This peptide exists in N-terminally amidated and non-amidated forms. The amidated form is more active and has a greater alpha-helix content than the non-amidated form. As to expression, expressed in gill, skin, intestine, spleen, anterior kidney, and blood cells.

It is found in the secreted. Its function is as follows. The amidated peptide is bactericidal on human pathogens like S.aureus or E.coli, as well as on the fish pathogen A.salmonicida. May also be active against a variety of fungi. It can kill bacteria in less than 30 minutes (S.aureus) and 120 minutes (V.vulnificus). It induces hemolysis of erythrocytes from human and fishes (sea bass and lesser-spotted dogfish). In terms of biological role, the non-amidated peptide only inhibits growth of human pathogens like S.aureus or E.coli, and the fish pathogen A.salmonicida. Induces hemolysis of erythrocytes from human and fishes (sea bass and lesser-spotted dogfish). The protein is Pteroicidin-alpha of Pterois volitans (Red lionfish).